The primary structure comprises 516 residues: Na(+)/H(+) antiporter NhaB (516 aa).

The next 12 membrane-spanning stretches (helical) occupy residues 23 to 43 (LALI…PFVA), 61 to 80 (CYPL…IGMT), 97 to 117 (LLLM…LFVF), 120 to 140 (LLLG…AAAF), 144 to 164 (FLDA…FYGI), 202 to 222 (LMMH…VGEP), 238 to 258 (FFLR…LTCL), 303 to 323 (ALIG…VGLI), 348 to 368 (TEAL…AVII), 391 to 411 (LFYL…VGTV), 447 to 467 (ATPN…APLI), and 475 to 495 (VWMA…CVEF).

Belongs to the NhaB Na(+)/H(+) (TC 2.A.34) antiporter family.

Its subcellular location is the cell inner membrane. It carries out the reaction 2 Na(+)(in) + 3 H(+)(out) = 2 Na(+)(out) + 3 H(+)(in). Functionally, na(+)/H(+) antiporter that extrudes sodium in exchange for external protons. In Klebsiella pneumoniae subsp. pneumoniae (strain ATCC 700721 / MGH 78578), this protein is Na(+)/H(+) antiporter NhaB.